We begin with the raw amino-acid sequence, 283 residues long: Thymidylate synthase (283 aa).

A dUMP-binding site is contributed by R22. The Nucleophile role is filled by C160. Residues R180–D183, N191, and H221–Y223 contribute to the dUMP site. Residue D183 participates in (6R)-5,10-methylene-5,6,7,8-tetrahydrofolate binding. S282 provides a ligand contact to (6R)-5,10-methylene-5,6,7,8-tetrahydrofolate.

This sequence belongs to the thymidylate synthase family. Bacterial-type ThyA subfamily. As to quaternary structure, homodimer.

It localises to the cytoplasm. It carries out the reaction dUMP + (6R)-5,10-methylene-5,6,7,8-tetrahydrofolate = 7,8-dihydrofolate + dTMP. It functions in the pathway pyrimidine metabolism; dTTP biosynthesis. Its function is as follows. Catalyzes the reductive methylation of 2'-deoxyuridine-5'-monophosphate (dUMP) to 2'-deoxythymidine-5'-monophosphate (dTMP) while utilizing 5,10-methylenetetrahydrofolate (mTHF) as the methyl donor and reductant in the reaction, yielding dihydrofolate (DHF) as a by-product. This enzymatic reaction provides an intracellular de novo source of dTMP, an essential precursor for DNA biosynthesis. The polypeptide is Thymidylate synthase (Vibrio cholerae serotype O1 (strain ATCC 39541 / Classical Ogawa 395 / O395)).